Here is a 466-residue protein sequence, read N- to C-terminus: MTSEVLQTISSGSGFAQPQSSSTLDHDESLINPPLVKKKRNLPGNPDPEAEVIALSPTTLMATNRFLCEVCGKGFQRDQNLQLHRRGHNLPWKLKQRTSKEVRKRVYVCPEKTCVHHHSSRALGDLTGIKKHFCRKHGEKKWTCEKCAKRYAVQSDWKAHSKTCGTREYRCDCGTIFSRRDSFITHRAFCDALAEETAKINAVSHLNGLAAAGAPGSVNLNYQYLMGTFIPPLQPFVPQPQTNPNHHHQHFQPPTSSSLSLWMGQDIAPPQPQPDYDWVFGNAKAASACIDNNNTHDEQITQNANASLTTTTTLSAPSLFSSDQPQNANANSNVNMSATALLQKAAEIGATSTTTAATNDPSTFLQSFPLKSTDQTTSYDSGEKFFALFGSNNNIGLMSRSHDHQEIENARNDVTVASALDELQNYPWKRRRVDGGGEVGGGGQTRDFLGVGVQTLCHPSSINGWI.

Polar residues predominate over residues 1–23 (MTSEVLQTISSGSGFAQPQSSST). The tract at residues 1–29 (MTSEVLQTISSGSGFAQPQSSSTLDHDES) is disordered. Ser56 carries the phosphoserine modification. The C2H2-type 1 zinc-finger motif lies at 66-88 (FLCEVCGKGFQRDQNLQLHRRGH). Thr98 carries the phosphothreonine; by KIN10 modification. The C2H2-type 2 zinc-finger motif lies at 107 to 137 (YVCPEKTCVHHHSSRALGDLTGIKKHFCRKH). The Nuclear localization signal signature appears at 134–141 (CRKHGEKK). A C2H2-type 2; degenerate zinc finger spans residues 142-165 (WTCEKCAKRYAVQSDWKAHSKTCG). Zn(2+) is bound by residues Cys144, Cys147, His160, Cys164, Cys171, and Cys173. Residues 169–192 (YRCDCGTIFSRRDSFITHRAFCDA) form a CCHC-type 2; atypical zinc finger. A phosphoserine; by KIN10 mark is found at Ser178 and Ser182. An SHR-binding region spans residues 179-191 (RRDSFITHRAFCD). Positions 186 and 190 each coordinate Zn(2+).

As to quaternary structure, interacts with AKIN10. Inhibition of transcription factor activity by KIN10-mediated phosphorylation at Thr-98, Ser-178 and Ser-182 under sugar deprivation conditions, thus delaying flowering. Highly expressed in vegetative organs and at lower levels in flowers and siliques. Expressed predominantly in roots. In roots, present in cortex, endodermis, and pericycle layer.

Its subcellular location is the nucleus. Functionally, transcription activator that binds to the DNA sequence 5'-CTTTTGTCC-3'. Regulates photoperiodic flowering by modulating sugar transport and metabolism. Regulates SUS1 and SUS4. Transcription factor that regulates tissue boundaries and asymmetric cell division. Contributes to the sequestration of 'SHORT-ROOT' to the nucleus. The protein is Zinc finger protein NUTCRACKER of Arabidopsis thaliana (Mouse-ear cress).